Consider the following 393-residue polypeptide: Phosphoglycerate kinase (393 aa).

Substrate is bound by residues 21 to 23, Arg36, 59 to 62, Arg113, and Arg146; these read DLN and HLGR. ATP is bound by residues Lys197, Glu319, and 345–348; that span reads GGDT.

This sequence belongs to the phosphoglycerate kinase family. In terms of assembly, monomer.

Its subcellular location is the cytoplasm. The enzyme catalyses (2R)-3-phosphoglycerate + ATP = (2R)-3-phospho-glyceroyl phosphate + ADP. It functions in the pathway carbohydrate degradation; glycolysis; pyruvate from D-glyceraldehyde 3-phosphate: step 2/5. This is Phosphoglycerate kinase from Nitratidesulfovibrio vulgaris (strain DSM 19637 / Miyazaki F) (Desulfovibrio vulgaris).